Reading from the N-terminus, the 352-residue chain is MFKSLHQYAHVFSRLSLFGLAFAAAAQAQSQSLTVISFGGATKAAQEQAYFKPFERSGGGQVVAGEYNGEMAKVKAMVDVGKVSWDVVEVESPELLRGCDEGLFERLDPARFGDPAQFVPGTFSECGVATYVWSMVMAYDSTKLARAPQSWADFWNVREFPGKRGLRKGAKYTLEVALLADGVKAEDLYKVLATPEGVSRAFAKLDQLKPNIQWWEAGAQPPQWLAAGDVVMSAAYNGRIAAAQKEGVKLAIVWPGSLYDPEYWAVVKGTPNKALAEKFIAFASQPQTQKVFSEQIPYGPVHKGTLALLPKTVQEALPTAPANLEGARAVDAEFWVDHGEELEQRFNAWAAR.

Positions 1–28 are cleaved as a signal peptide; that stretch reads MFKSLHQYAHVFSRLSLFGLAFAAAAQA.

The protein belongs to the bacterial solute-binding protein 1 family.

It is found in the periplasm. Binds specifically gamma-aminobutyric acid (GABA) with nanomolar affinity. Does not bind structurally related compounds such as 4-aminovaleric acid, spermidine, histamine and butyric acid. The protein is Gamma-aminobutyric acid-binding protein of Pseudomonas aeruginosa (strain ATCC 15692 / DSM 22644 / CIP 104116 / JCM 14847 / LMG 12228 / 1C / PRS 101 / PAO1).